We begin with the raw amino-acid sequence, 247 residues long: Phycobilisome rod-core linker polypeptide CpcG2 (247 aa).

One can recognise a PBS-linker domain in the interval 11 to 189 (SSQNQRVPGY…YWRDKLESER (179 aa)). The interval 223 to 247 (PDTTRNTTPTGIPISVNPSANFPVR) is disordered.

This sequence belongs to the phycobilisome linker protein family. In terms of assembly, part of the phycobilisome, a hemidiscoidal structure that is composed of two distinct substructures: a core complex and a number of rods radiating from the core.

The protein localises to the cellular thylakoid membrane. In terms of biological role, rod-core linker protein required for attachment of phycocyanin to allophycocyanin in cores of phycobilisomes. Linker polypeptides determine the state of aggregation and the location of the disk-shaped phycobiliprotein units within the phycobilisome and modulate their spectroscopic properties in order to mediate a directed and optimal energy transfer. The chain is Phycobilisome rod-core linker polypeptide CpcG2 from Nostoc sp. (strain PCC 7120 / SAG 25.82 / UTEX 2576).